Here is a 329-residue protein sequence, read N- to C-terminus: MQGSVTEFLKPRLVDIEQVNSTRAKVTLEPLERGFGHTLGNALRRILLSSMPGCAVTEVEIDGVLHEYSSKEGVQEDILEILLNLKGLAVTIEGKDEAMLTLSKSGAGPVIAADITHDGDVTIVNPDHVICHLTGNNDISMRIRVERGRGYVPASARAQTEDDDRPIGRLLVDASFSPVARIAYNVEAARVEQRTDLDKLVIDMTTNGTIDPEEAIRRSATILAEQLDAFVELRDVTEPEMKEEKPEFDPILLRPVDDLELTVRSANCLKAEAIHYIGDLVQRTEVELLKTPNLGKKSLTEIKDVLASRGLSLGMRLENWPPASLADDL.

An alpha N-terminal domain (alpha-NTD) region spans residues 1–234; sequence MQGSVTEFLK…EQLDAFVELR (234 aa). The alpha C-terminal domain (alpha-CTD) stretch occupies residues 248-329; that stretch reads FDPILLRPVD…WPPASLADDL (82 aa).

Belongs to the RNA polymerase alpha chain family. In terms of assembly, homodimer. The RNAP catalytic core consists of 2 alpha, 1 beta, 1 beta' and 1 omega subunit. When a sigma factor is associated with the core the holoenzyme is formed, which can initiate transcription.

It carries out the reaction RNA(n) + a ribonucleoside 5'-triphosphate = RNA(n+1) + diphosphate. Functionally, DNA-dependent RNA polymerase catalyzes the transcription of DNA into RNA using the four ribonucleoside triphosphates as substrates. In Shewanella sp. (strain ANA-3), this protein is DNA-directed RNA polymerase subunit alpha.